The primary structure comprises 368 residues: Nicotinamide/nicotinic acid mononucleotide adenylyltransferase (368 aa).

The segment covering 1 to 14 (MHTMNGDNFANSFP) has biased composition (polar residues). The interval 1-25 (MHTMNGDNFANSFPKNPLLSRNSSS) is disordered. S36 bears the Phosphoserine mark. The interval 47–78 (AKEHEERIRRPSVNRAWQKNSTSGGPSVSLEK) is disordered. Residues 61–72 (RAWQKNSTSGGP) show a composition bias toward polar residues. A phosphoserine mark is found at S75 and S85. S135 and F136 together coordinate NAD(+). Residue H143 coordinates ATP. Positions 215, 250, 252, 263, 282, and 313 each coordinate NAD(+). Position 318–321 (318–321 (TKVR)) interacts with ATP.

The protein belongs to the eukaryotic NMN adenylyltransferase family. A divalent metal cation serves as cofactor.

Its subcellular location is the cytoplasm. It is found in the nucleus. It catalyses the reaction beta-nicotinamide D-ribonucleotide + ATP + H(+) = diphosphate + NAD(+). The catalysed reaction is nicotinate beta-D-ribonucleotide + ATP + H(+) = deamido-NAD(+) + diphosphate. The protein operates within cofactor biosynthesis; NAD(+) biosynthesis; deamido-NAD(+) from nicotinate D-ribonucleotide: step 1/1. It participates in cofactor biosynthesis; NAD(+) biosynthesis; NAD(+) from nicotinamide D-ribonucleotide: step 1/1. Catalyzes the formation of NAD(+) from nicotinamide mononucleotide (NMN) and ATP. Can also use the deamidated form; nicotinic acid mononucleotide (NaMN) as substrate to form deamido-NAD(+) (NaAD). Key enzyme in both de novo and salvage pathways for NAD(+) biosynthesis. This chain is Nicotinamide/nicotinic acid mononucleotide adenylyltransferase, found in Schizosaccharomyces pombe (strain 972 / ATCC 24843) (Fission yeast).